The sequence spans 200 residues: Intraflagellar transport protein 43 homolog (200 aa).

Disordered regions lie at residues 56–76 and 175–200; these read KTGK…IAAP and ERID…SSKY. The span at 175 to 192 shows a compositional bias: basic and acidic residues; sequence ERIDAKDQPSDSRSRNAR.

The protein belongs to the IFT43 family. As to quaternary structure, component of the IFT complex A (IFT-A) composed of at least che-11, daf-10, dyf-2, ift-139, ift-43 and ifta-1. As to expression, expressed in ciliated sensory neurons.

It is found in the cell projection. Its subcellular location is the cilium. In terms of biological role, as a component of IFT complex A (IFT-A), a complex required for retrograde ciliary transport and entry into cilia of G protein-coupled receptors (GPCRs), it is involved in ciliogenesis. In particular, may act redundantly with the intraflagellar transport protein ift-139 to regulate the transport of specific ciliary cargo proteins such as che-3 which are related to motility. The polypeptide is Intraflagellar transport protein 43 homolog (Caenorhabditis elegans).